An 869-amino-acid polypeptide reads, in one-letter code: Phenylalanine--tRNA ligase beta subunit (869 aa).

The region spanning 41–162 is the tRNA-binding domain; sequence SQVTGPIVVG…QYGFSEAEYE (122 aa). Residues 443–519 form the B5 domain; it reads PRAKAIHFKA…RLVGYDQIPI (77 aa). The Mg(2+) site is built by D497, D503, E506, and E507. The FDX-ACB domain occupies 776-868; it reads STFPPVKQDL…EAAEIGAQLR (93 aa).

The protein belongs to the phenylalanyl-tRNA synthetase beta subunit family. Type 1 subfamily. Tetramer of two alpha and two beta subunits. Requires Mg(2+) as cofactor.

The protein resides in the cytoplasm. The catalysed reaction is tRNA(Phe) + L-phenylalanine + ATP = L-phenylalanyl-tRNA(Phe) + AMP + diphosphate + H(+). This Bifidobacterium longum (strain NCC 2705) protein is Phenylalanine--tRNA ligase beta subunit.